Here is an 89-residue protein sequence, read N- to C-terminus: Ribonuclease P protein component 1 (89 aa).

The protein belongs to the eukaryotic/archaeal RNase P protein component 1 family. Consists of a catalytic RNA component and at least 4-5 protein subunits.

The protein resides in the cytoplasm. The catalysed reaction is Endonucleolytic cleavage of RNA, removing 5'-extranucleotides from tRNA precursor.. Functionally, part of ribonuclease P, a protein complex that generates mature tRNA molecules by cleaving their 5'-ends. In Thermoplasma volcanium (strain ATCC 51530 / DSM 4299 / JCM 9571 / NBRC 15438 / GSS1), this protein is Ribonuclease P protein component 1.